Consider the following 297-residue polypeptide: Mitochondrial nicotinamide adenine dinucleotide transporter SLC25A51 (297 aa).

Over residues 1–11 the composition is skewed to basic and acidic residues; the sequence is MMDSEAHEKRP. The segment at 1 to 20 is disordered; the sequence is MMDSEAHEKRPPILTSSKQD. Solcar repeat units follow at residues 28–108, 116–200, and 213–296; these read VGEM…LSCL, PEFA…IKEH, and NDFI…LLKV. The next 6 helical transmembrane spans lie at 36 to 56, 85 to 105, 116 to 135, 179 to 199, 215 to 235, and 268 to 289; these read CGCC…KVLF, LPPL…YEDL, PEFA…EAIF, ILFR…PIKE, FICG…INVV, and LFRG…INAT.

The protein belongs to the mitochondrial carrier (TC 2.A.29) family.

The protein resides in the mitochondrion inner membrane. The enzyme catalyses NAD(+)(in) = NAD(+)(out). In terms of biological role, mitochondrial membrane carrier protein that mediates the import of NAD(+) into mitochondria. Mitochondrial NAD(+) is required for glycolysis and mitochondrial respiration. Compared to SLC25A52, SLC25A51-mediated transport is essential for the import of NAD(+) in mitochondria. The transport mechanism, uniport or antiport, its electrogenicity and substrate selectivity, remain to be elucidated. The protein is Mitochondrial nicotinamide adenine dinucleotide transporter SLC25A51 of Homo sapiens (Human).